The primary structure comprises 110 residues: UPF0122 protein spr1167 (110 aa).

It belongs to the UPF0122 family.

Functionally, might take part in the signal recognition particle (SRP) pathway. This is inferred from the conservation of its genetic proximity to ftsY/ffh. May be a regulatory protein. The chain is UPF0122 protein spr1167 from Streptococcus pneumoniae (strain ATCC BAA-255 / R6).